Consider the following 149-residue polypeptide: Calmodulin (149 aa).

The residue at position 2 (Ala2) is an N-acetylalanine. EF-hand domains are found at residues 8-43 (EQIS…LGQN), 44-79 (PTEA…KMRD), 81-116 (DSEE…LGEK), and 117-149 (LTDN…MLSK). Ca(2+) is bound by residues Asp21, Asp23, Asp25, Thr27, Glu32, Asp57, Asp59, Asn61, Thr63, Glu68, Asp94, Asp96, Asn98, Tyr100, Glu105, Asp130, Asp132, Asp134, Gln136, and Glu141.

This sequence belongs to the calmodulin family.

Calmodulin mediates the control of a large number of enzymes, ion channels and other proteins by Ca(2+). Among the enzymes to be stimulated by the calmodulin-Ca(2+) complex are a number of protein kinases and phosphatases. This chain is Calmodulin (CMD1), found in Pleurotus ostreatus (Oyster mushroom).